Reading from the N-terminus, the 79-residue chain is DNA gyrase inhibitor YacG (79 aa).

Zn(2+) is bound by residues Cys7, Cys10, Cys26, and Cys30.

Belongs to the DNA gyrase inhibitor YacG family. Interacts with GyrB. Requires Zn(2+) as cofactor.

Inhibits all the catalytic activities of DNA gyrase by preventing its interaction with DNA. Acts by binding directly to the C-terminal domain of GyrB, which probably disrupts DNA binding by the gyrase. This chain is DNA gyrase inhibitor YacG, found in Shewanella halifaxensis (strain HAW-EB4).